The chain runs to 552 residues: Methyl-coenzyme M reductase II subunit alpha (552 aa).

Gln-150 serves as a coordination point for coenzyme F430. Coenzyme B is bound by residues Arg-228, 259 to 260 (KH), and Arg-273. The coenzyme M site is built by Tyr-335 and Tyr-446.

Belongs to the methyl-coenzyme M reductase alpha subunit family. In terms of assembly, MCR is a hexamer of two alpha, two beta, and two gamma chains, forming a dimer of heterotrimers. Requires coenzyme F430 as cofactor.

The enzyme catalyses coenzyme B + methyl-coenzyme M = methane + coenzyme M-coenzyme B heterodisulfide. It participates in one-carbon metabolism; methyl-coenzyme M reduction; methane from methyl-coenzyme M: step 1/1. Its function is as follows. Component of the methyl-coenzyme M reductase (MCR) I that catalyzes the reductive cleavage of methyl-coenzyme M (CoM-S-CH3 or 2-(methylthio)ethanesulfonate) using coenzyme B (CoB or 7-mercaptoheptanoylthreonine phosphate) as reductant which results in the production of methane and the mixed heterodisulfide of CoB and CoM (CoM-S-S-CoB). This is the final step in methanogenesis. The sequence is that of Methyl-coenzyme M reductase II subunit alpha (mrtA) from Methanocaldococcus jannaschii (strain ATCC 43067 / DSM 2661 / JAL-1 / JCM 10045 / NBRC 100440) (Methanococcus jannaschii).